A 492-amino-acid polypeptide reads, in one-letter code: Catalase isozyme C (492 aa).

Position 62 (R62) interacts with heme. H65 is a catalytic residue. R102 is a heme binding site. N138 is an active-site residue. F151 contributes to the heme binding site. Y210 bears the Phosphotyrosine; by STRK1 mark. Residues C325–Y348 constitute a cross-link (3-(S-cysteinyl)-tyrosine (Cys-Tyr)). 3 residues coordinate heme: R344, Y348, and R355. A Peroxisome targeting signal motif is present at residues S484–M492.

This sequence belongs to the catalase family. In terms of assembly, homotetramer. Interacts with GLO1 and GLO4; these interactions are disturbed by alpha-hydroxy-2-pyridinemethanesulfonic acid (HPMS) and salicylic acid (SA). Interacts with STRK1 at the plasma membrane. The cofactor is heme. Activated by STRK1-mediated phosphorylation at Tyr-210 upon salt and oxidative stress. As to expression, highly expressed in mature leaves. Mainly expressed in leaf blades, stems, panicles, leaf sheaths, and culms, but barely in roots.

It is found in the peroxisome. It localises to the glyoxysome. The protein resides in the cell membrane. It carries out the reaction 2 H2O2 = O2 + 2 H2O. Its activity is regulated as follows. Strongly inhibited by beta-mercaptoethanol, sodium azide and potassium cyanide. Slightly repressed by 3-amino-1,2,4-triazole (3-AT). Activity is repressed proportionally to increased concentration of NaCl, KCl, LiCl and MgCl(2). Functionally, occurs in almost all aerobically respiring organisms and serves to protect cells from the toxic effects of hydrogen peroxide. Responsible for the redox homeostasis in leaves. Prevents nitric oxide (NO) accumulation and subsequent NO-mediated leaf cell death as well as the S-nitrosylation of specific proteins (e.g. glyceraldehyde 3-phosphate dehydrogenase and thioredoxin) by degrading H(2)O(2). Involved in photorespiration. Promotes drought stress tolerance and recovery. Involved in NO-mediated enhanced tolerance to zinc oxide nanoparticles (ZnO NPs)-induced phytotoxicity. Participates in melatonin-mediated detoxification. This Oryza sativa subsp. japonica (Rice) protein is Catalase isozyme C.